We begin with the raw amino-acid sequence, 417 residues long: UDP-N-acetylglucosamine 1-carboxyvinyltransferase (417 aa).

22–23 (KN) is a binding site for phosphoenolpyruvate. Arginine 92 contacts UDP-N-acetyl-alpha-D-glucosamine. Cysteine 116 functions as the Proton donor in the catalytic mechanism. Cysteine 116 carries the 2-(S-cysteinyl)pyruvic acid O-phosphothioketal modification. UDP-N-acetyl-alpha-D-glucosamine-binding positions include 161 to 164 (KVSV), aspartate 305, and isoleucine 327.

Belongs to the EPSP synthase family. MurA subfamily.

It is found in the cytoplasm. The enzyme catalyses phosphoenolpyruvate + UDP-N-acetyl-alpha-D-glucosamine = UDP-N-acetyl-3-O-(1-carboxyvinyl)-alpha-D-glucosamine + phosphate. The protein operates within cell wall biogenesis; peptidoglycan biosynthesis. Its function is as follows. Cell wall formation. Adds enolpyruvyl to UDP-N-acetylglucosamine. The chain is UDP-N-acetylglucosamine 1-carboxyvinyltransferase from Pelagibacter ubique (strain HTCC1062).